The sequence spans 137 residues: 1,4-dihydroxy-2-naphthoyl-CoA hydrolase (137 aa).

Residue D12 is part of the active site.

The protein belongs to the 4-hydroxybenzoyl-CoA thioesterase family. DHNA-CoA hydrolase subfamily.

It carries out the reaction 1,4-dihydroxy-2-naphthoyl-CoA + H2O = 1,4-dihydroxy-2-naphthoate + CoA + H(+). It participates in cofactor biosynthesis; phylloquinone biosynthesis. It functions in the pathway quinol/quinone metabolism; 1,4-dihydroxy-2-naphthoate biosynthesis; 1,4-dihydroxy-2-naphthoate from chorismate: step 7/7. Its function is as follows. Catalyzes the hydrolysis of 1,4-dihydroxy-2-naphthoyl-CoA (DHNA-CoA) to 1,4-dihydroxy-2-naphthoate (DHNA), a reaction involved in phylloquinone (vitamin K1) biosynthesis. The polypeptide is 1,4-dihydroxy-2-naphthoyl-CoA hydrolase (Acaryochloris marina (strain MBIC 11017)).